A 457-amino-acid chain; its full sequence is Argininosuccinate lyase (457 aa).

It belongs to the lyase 1 family. Argininosuccinate lyase subfamily.

The protein localises to the cytoplasm. The catalysed reaction is 2-(N(omega)-L-arginino)succinate = fumarate + L-arginine. Its pathway is amino-acid biosynthesis; L-arginine biosynthesis; L-arginine from L-ornithine and carbamoyl phosphate: step 3/3. The sequence is that of Argininosuccinate lyase from Aquifex aeolicus (strain VF5).